The sequence spans 361 residues: Phosphoserine aminotransferase (361 aa).

Position 42 (Arg42) interacts with L-glutamate. Pyridoxal 5'-phosphate-binding positions include 76-77 (AT), Trp102, Thr152, Asp172, and Gln195. The residue at position 196 (Lys196) is an N6-(pyridoxal phosphate)lysine. 237–238 (NT) contributes to the pyridoxal 5'-phosphate binding site.

Belongs to the class-V pyridoxal-phosphate-dependent aminotransferase family. SerC subfamily. As to quaternary structure, homodimer. Pyridoxal 5'-phosphate serves as cofactor.

The protein resides in the cytoplasm. The catalysed reaction is O-phospho-L-serine + 2-oxoglutarate = 3-phosphooxypyruvate + L-glutamate. It carries out the reaction 4-(phosphooxy)-L-threonine + 2-oxoglutarate = (R)-3-hydroxy-2-oxo-4-phosphooxybutanoate + L-glutamate. The protein operates within amino-acid biosynthesis; L-serine biosynthesis; L-serine from 3-phospho-D-glycerate: step 2/3. Its pathway is cofactor biosynthesis; pyridoxine 5'-phosphate biosynthesis; pyridoxine 5'-phosphate from D-erythrose 4-phosphate: step 3/5. Catalyzes the reversible conversion of 3-phosphohydroxypyruvate to phosphoserine and of 3-hydroxy-2-oxo-4-phosphonooxybutanoate to phosphohydroxythreonine. The sequence is that of Phosphoserine aminotransferase from Stenotrophomonas maltophilia (strain R551-3).